A 716-amino-acid chain; its full sequence is Penicillin-binding protein 2A (716 aa).

Residues 22 to 42 (LNILFLAAFVIFTWIIVELGI) form a helical membrane-spanning segment. The active-site Acyl-ester intermediate is Ser397. Residues 689-706 (SKQDKEGTQQKNKDKIEE) are compositionally biased toward basic and acidic residues. The interval 689-716 (SKQDKEGTQQKNKDKIEENAENTTSSDN) is disordered.

This sequence belongs to the transpeptidase family.

The protein localises to the cell membrane. Its subcellular location is the forespore inner membrane. It catalyses the reaction Preferential cleavage: (Ac)2-L-Lys-D-Ala-|-D-Ala. Also transpeptidation of peptidyl-alanyl moieties that are N-acyl substituents of D-alanine.. It participates in cell wall biogenesis; peptidoglycan biosynthesis. In terms of biological role, involved in the synthesis of peptidoglycan associated with cell wall elongation, especially following spore germination. Has a partially redundant function with PBP 1 (ponA) or PBP 4 (pbpD) during spore outgrowth. Plays a redundant role with PbpH in determining the rod shape of the cell during vegetative growth and spore outgrowth. The polypeptide is Penicillin-binding protein 2A (Bacillus subtilis (strain 168)).